Reading from the N-terminus, the 448-residue chain is Phosphoglucosamine mutase (448 aa).

Ser-100 (phosphoserine intermediate) is an active-site residue. 4 residues coordinate Mg(2+): Ser-100, Asp-240, Asp-242, and Asp-244. Position 100 is a phosphoserine (Ser-100).

This sequence belongs to the phosphohexose mutase family. It depends on Mg(2+) as a cofactor. In terms of processing, activated by phosphorylation.

It catalyses the reaction alpha-D-glucosamine 1-phosphate = D-glucosamine 6-phosphate. Catalyzes the conversion of glucosamine-6-phosphate to glucosamine-1-phosphate. In Alkaliphilus metalliredigens (strain QYMF), this protein is Phosphoglucosamine mutase.